The following is a 2281-amino-acid chain: Protein Ycf2 (2281 aa).

Residue 1635–1642 coordinates ATP; sequence GSIGSGRS.

This sequence belongs to the Ycf2 family.

It localises to the plastid. Its subcellular location is the chloroplast stroma. In terms of biological role, probable ATPase of unknown function. Its presence in a non-photosynthetic plant (Epifagus virginiana) and experiments in tobacco indicate that it has an essential function which is probably not related to photosynthesis. The protein is Protein Ycf2 of Coffea arabica (Arabian coffee).